The following is a 493-amino-acid chain: Ribose import ATP-binding protein RbsA (493 aa).

ABC transporter domains follow at residues 5-241 (LKIS…VGRR) and 252-491 (EKGE…AAAI). 37 to 44 (GENGAGKS) is a binding site for ATP.

This sequence belongs to the ABC transporter superfamily. Ribose importer (TC 3.A.1.2.1) family. As to quaternary structure, the complex is composed of an ATP-binding protein (RbsA), two transmembrane proteins (RbsC) and a solute-binding protein (RbsB).

It localises to the cell inner membrane. It catalyses the reaction D-ribose(out) + ATP + H2O = D-ribose(in) + ADP + phosphate + H(+). In terms of biological role, part of the ABC transporter complex RbsABC involved in ribose import. Responsible for energy coupling to the transport system. The polypeptide is Ribose import ATP-binding protein RbsA (Haemophilus influenzae (strain ATCC 51907 / DSM 11121 / KW20 / Rd)).